Here is a 92-residue protein sequence, read N- to C-terminus: Large ribosomal subunit protein eL43 (92 aa).

The C4-type zinc finger occupies 39 to 60 (CSFCGKKTVRRGAAGIWSCHSC).

This sequence belongs to the eukaryotic ribosomal protein eL43 family.

The chain is Large ribosomal subunit protein eL43 (RPL43) from Candida glabrata (strain ATCC 2001 / BCRC 20586 / JCM 3761 / NBRC 0622 / NRRL Y-65 / CBS 138) (Yeast).